Consider the following 702-residue polypeptide: Kinesin-like protein KIF3A (702 aa).

The region spanning 14–345 is the Kinesin motor domain; that stretch reads NVKVVVRCRP…LRYANRAKNI (332 aa). 100 to 107 provides a ligand contact to ATP; sequence GQTGTGKT. A coiled-coil region spans residues 355–593; that stretch reads PKDALLRQFQ…LSRELRLQML (239 aa). Disordered stretches follow at residues 372 to 424 and 667 to 702; these read KKLE…KMIE and LMKL…SLLQ. Positions 376 to 400 are enriched in acidic residues; that stretch reads EGEEISGSDISGSEEDDDEEGEVGE. Basic and acidic residues predominate over residues 410–424; it reads DQAGKKKVSPDKMIE. The globular stretch occupies residues 600-702; sequence PRDYQEMIEN…PETVIDSLLQ (103 aa). Residues 675–690 are compositionally biased toward basic residues; the sequence is TSKGKARPKTGRRKRS. The residue at position 690 (S690) is a Phosphoserine.

Belongs to the TRAFAC class myosin-kinesin ATPase superfamily. Kinesin family. Kinesin II subfamily. Heterodimer of KIF3A and KIF3B. Interacts with CIMAP3. Interacts with CLN3. Interacts with DCTN1. Interacts with FLCN. Interacts with AP3B1.

It localises to the cytoplasm. It is found in the cytoskeleton. The protein resides in the cell projection. The protein localises to the cilium. Its subcellular location is the microtubule organizing center. It localises to the centrosome. It is found in the centriole. In terms of biological role, microtubule-based anterograde translocator for membranous organelles. Plus end-directed microtubule sliding activity in vitro. Plays a role in primary cilia formation. Plays a role in centriole cohesion and subdistal appendage organization and function. Regulates the formation of the subdistal appendage via recruitment of DCTN1 to the centriole. Also required for ciliary basal feet formation and microtubule anchoring to mother centriole. This Macaca fascicularis (Crab-eating macaque) protein is Kinesin-like protein KIF3A (KIF3A).